The sequence spans 365 residues: 3-isopropylmalate dehydrogenase (365 aa).

80 to 93 (GPKWADNTGDQRPE) contacts NAD(+). Arg100, Arg110, Arg138, and Asp223 together coordinate substrate. Asp223, Asp247, and Asp251 together coordinate Mg(2+). 280-292 (GSAPDIAGQDVAN) is an NAD(+) binding site. The interval 337–365 (NEEDASTSAFGREVATRAADSVPQNAPTP) is disordered.

The protein belongs to the isocitrate and isopropylmalate dehydrogenases family. LeuB type 1 subfamily. In terms of assembly, homodimer. The cofactor is Mg(2+). Mn(2+) serves as cofactor.

Its subcellular location is the cytoplasm. The catalysed reaction is (2R,3S)-3-isopropylmalate + NAD(+) = 4-methyl-2-oxopentanoate + CO2 + NADH. It participates in amino-acid biosynthesis; L-leucine biosynthesis; L-leucine from 3-methyl-2-oxobutanoate: step 3/4. Catalyzes the oxidation of 3-carboxy-2-hydroxy-4-methylpentanoate (3-isopropylmalate) to 3-carboxy-4-methyl-2-oxopentanoate. The product decarboxylates to 4-methyl-2 oxopentanoate. This is 3-isopropylmalate dehydrogenase from Salinibacter ruber (strain DSM 13855 / M31).